The primary structure comprises 608 residues: Glutamine--fructose-6-phosphate aminotransferase [isomerizing] (608 aa).

Residue C2 is the Nucleophile; for GATase activity of the active site. One can recognise a Glutamine amidotransferase type-2 domain in the interval 2 to 217; the sequence is CGIVGIVGTQ…DGDCAIVTRD (216 aa). SIS domains lie at 281 to 422 and 456 to 598; these read ADKA…ARGT and LSRD…VDQP. K603 (for Fru-6P isomerization activity) is an active-site residue.

Homodimer.

Its subcellular location is the cytoplasm. It catalyses the reaction D-fructose 6-phosphate + L-glutamine = D-glucosamine 6-phosphate + L-glutamate. Functionally, catalyzes the first step in hexosamine metabolism, converting fructose-6P into glucosamine-6P using glutamine as a nitrogen source. In Agrobacterium fabrum (strain C58 / ATCC 33970) (Agrobacterium tumefaciens (strain C58)), this protein is Glutamine--fructose-6-phosphate aminotransferase [isomerizing].